A 389-amino-acid chain; its full sequence is 3-ketoacyl-CoA thiolase (389 aa).

Catalysis depends on cysteine 91, which acts as the Acyl-thioester intermediate. Active-site proton acceptor residues include histidine 343 and cysteine 373.

This sequence belongs to the thiolase-like superfamily. Thiolase family. In terms of assembly, heterotetramer of two alpha chains (FadB) and two beta chains (FadA).

The protein localises to the cytoplasm. It catalyses the reaction an acyl-CoA + acetyl-CoA = a 3-oxoacyl-CoA + CoA. It functions in the pathway lipid metabolism; fatty acid beta-oxidation. Catalyzes the final step of fatty acid oxidation in which acetyl-CoA is released and the CoA ester of a fatty acid two carbons shorter is formed. The chain is 3-ketoacyl-CoA thiolase from Pseudoalteromonas translucida (strain TAC 125).